Consider the following 176-residue polypeptide: PKHD-type hydroxylase Mfla_0096 (176 aa).

In terms of domain architecture, Fe2OG dioxygenase spans 78-147 (KVFPPLFNRY…NQIARGTYGA (70 aa)).

The cofactor is Fe(2+). L-ascorbate is required as a cofactor.

This is PKHD-type hydroxylase Mfla_0096 from Methylobacillus flagellatus (strain ATCC 51484 / DSM 6875 / VKM B-1610 / KT).